The chain runs to 159 residues: Ribosomal RNA large subunit methyltransferase H (159 aa).

Residues Leu-76, Gly-108, and 127 to 132 (FSKMTF) contribute to the S-adenosyl-L-methionine site.

Belongs to the RNA methyltransferase RlmH family. As to quaternary structure, homodimer.

It is found in the cytoplasm. It catalyses the reaction pseudouridine(1915) in 23S rRNA + S-adenosyl-L-methionine = N(3)-methylpseudouridine(1915) in 23S rRNA + S-adenosyl-L-homocysteine + H(+). Specifically methylates the pseudouridine at position 1915 (m3Psi1915) in 23S rRNA. The protein is Ribosomal RNA large subunit methyltransferase H of Shouchella clausii (strain KSM-K16) (Alkalihalobacillus clausii).